Here is a 170-residue protein sequence, read N- to C-terminus: Ribosome maturation factor RimM (170 aa).

Residues 97–170 (KPDEYYWVDL…LVVVDWDPEF (74 aa)) enclose the PRC barrel domain.

Belongs to the RimM family. Binds ribosomal protein uS19.

The protein localises to the cytoplasm. Its function is as follows. An accessory protein needed during the final step in the assembly of 30S ribosomal subunit, possibly for assembly of the head region. Essential for efficient processing of 16S rRNA. May be needed both before and after RbfA during the maturation of 16S rRNA. It has affinity for free ribosomal 30S subunits but not for 70S ribosomes. The polypeptide is Ribosome maturation factor RimM (Stenotrophomonas maltophilia (strain K279a)).